Consider the following 529-residue polypeptide: Delayed-rectifier potassium channel regulatory subunit KCNS1 (529 aa).

Residues 1-217 (MLMLLVRGTH…LTMENPGYSL (217 aa)) are Cytoplasmic-facing. The helical transmembrane segment at 218 to 239 (PSKLFSCVSISVVLASIAAMCI) threads the bilayer. The Extracellular segment spans residues 240–270 (HSLPEYQAREAAAAVAAVAAGRSPEGVRDDP). A helical transmembrane segment spans residues 271–293 (VLRRLEYFCIAWFSFEVSSRLLL). Over 294 to 304 (APSTRNFFCHP) the chain is Cytoplasmic. A helical membrane pass occupies residues 305 to 322 (LNLIDIVSVLPFYLTLLA). The Extracellular segment spans residues 323-340 (GVALGDQGGTGGKELGHL). A helical; Voltage-sensor transmembrane segment spans residues 341 to 361 (GKVVQVFRLMRIFRVLKLARH). Over 362-376 (STGLRSLGATLKHSY) the chain is Cytoplasmic. The helical transmembrane segment at 377–398 (REVGILLLYLAVGVSVFSGVAY) threads the bilayer. Residues 399–411 (TAEKEEDVGFNTI) are Extracellular-facing. The segment at residues 412-423 (PACWWWGTVSMT) is an intramembrane region (helical). The Selectivity filter motif lies at 424–429 (TVGYGD). Residues 424-431 (TVGYGDVV) lie within the membrane without spanning it. Residues 432-438 (PVTVAGK) are Extracellular-facing. The helical transmembrane segment at 439 to 467 (LAASGCILGGILVVALPITIIFNKFSHFY) threads the bilayer. Topologically, residues 468-529 (RRQKALEAAV…PSEPPHPQMY (62 aa)) are cytoplasmic. The disordered stretch occupies residues 494-529 (GVSEASLETSRETSQEGRSADLETQAPSEPPHPQMY). Over residues 502 to 514 (TSRETSQEGRSAD) the composition is skewed to basic and acidic residues.

This sequence belongs to the potassium channel family. S (TC 1.A.1.2) subfamily. Kv9.1/KCNS1 sub-subfamily. As to quaternary structure, heterotetramer with KCNB1. Heterotetramer with KCNB2. Does not form homomultimers.

It is found in the cell membrane. In terms of biological role, potassium channel regulatory subunit that modulate the delayed rectifier voltage-gated potassium channel activity of KCNB1 and KCNB2 by altering their kinetics, expression levels, and shifting the half-inactivation potential to more polarized values. While it does not form functional channels on its own, it can form functional heterotetrameric channels with KCNB1 and KCNB2. Each regulatory subunit has unique regulatory properties that can lead to extensive inhibition, significant changes in kinetics, and/or substantial shifts in the voltage dependencies of the inactivation process. The protein is Delayed-rectifier potassium channel regulatory subunit KCNS1 of Macaca mulatta (Rhesus macaque).